The sequence spans 738 residues: Sporulation kinase E (738 aa).

PAS domains are found at residues 29–99, 150–220, 271–342, and 391–462; these read ELNQ…FKKG, NEQL…NRKG, SEER…YGEI, and SELK…FDEM. The region spanning 523 to 729 is the Histidine kinase domain; that stretch reads GIAHEIRNPM…VFHITLPVRQ (207 aa). Position 526 is a phosphohistidine; by autocatalysis (His526).

The enzyme catalyses ATP + protein L-histidine = ADP + protein N-phospho-L-histidine.. Its function is as follows. Phosphorylates the sporulation-regulatory protein spo0A under biofilm growth conditions. Also able to weakly phosphorylate spo0F. This Bacillus subtilis (strain 168) protein is Sporulation kinase E (kinE).